Reading from the N-terminus, the 252-residue chain is Indole-3-glycerol phosphate synthase (252 aa).

Belongs to the TrpC family.

It catalyses the reaction 1-(2-carboxyphenylamino)-1-deoxy-D-ribulose 5-phosphate + H(+) = (1S,2R)-1-C-(indol-3-yl)glycerol 3-phosphate + CO2 + H2O. Its pathway is amino-acid biosynthesis; L-tryptophan biosynthesis; L-tryptophan from chorismate: step 4/5. This chain is Indole-3-glycerol phosphate synthase, found in Listeria monocytogenes serotype 4b (strain CLIP80459).